Here is a 187-residue protein sequence, read N- to C-terminus: Elongation factor P (187 aa).

The protein belongs to the elongation factor P family.

Its subcellular location is the cytoplasm. It functions in the pathway protein biosynthesis; polypeptide chain elongation. Involved in peptide bond synthesis. Stimulates efficient translation and peptide-bond synthesis on native or reconstituted 70S ribosomes in vitro. Probably functions indirectly by altering the affinity of the ribosome for aminoacyl-tRNA, thus increasing their reactivity as acceptors for peptidyl transferase. The polypeptide is Elongation factor P (Erythrobacter litoralis (strain HTCC2594)).